The chain runs to 331 residues: ABSCISIC ACID-INSENSITIVE 5-like protein 1 (331 aa).

2 positions are modified to phosphoserine: S40 and S98. T143 is modified (phosphothreonine). The region spanning 247 to 310 (MERRQRRMIK…RQEIISRSKQ (64 aa)) is the bZIP domain. The tract at residues 249–268 (RRQRRMIKNRESAARSRARR) is basic motif. Positions 275–289 (LELELNNLTEENTKL) are leucine-zipper. The segment covering 296-320 (NEKKRRQEIISRSKQVTKEKSGDKL) has biased composition (basic and acidic residues). Residues 296–331 (NEKKRRQEIISRSKQVTKEKSGDKLRKIRRMASAGW) are disordered.

Belongs to the bZIP family. ABI5 subfamily. DNA-binding heterodimer with AREB3/DPBF3 or EEL/DPBF4. Interacts with the AFP proteins AFP1, AFP2 and AFP3. As to expression, predominantly expressed in seeds.

It is found in the nucleus. In terms of biological role, could participate in abscisic acid-regulated gene expression during seed development. The protein is ABSCISIC ACID-INSENSITIVE 5-like protein 1 (DPBF2) of Arabidopsis thaliana (Mouse-ear cress).